We begin with the raw amino-acid sequence, 221 residues long: Probable septum site-determining protein MinC (221 aa).

It belongs to the MinC family. Interacts with MinD and FtsZ.

Functionally, cell division inhibitor that blocks the formation of polar Z ring septums. Rapidly oscillates between the poles of the cell to destabilize FtsZ filaments that have formed before they mature into polar Z rings. Prevents FtsZ polymerization. The protein is Probable septum site-determining protein MinC of Shewanella sp. (strain ANA-3).